The sequence spans 548 residues: Tyrosine-protein phosphatase non-receptor type 61F (548 aa).

Topologically, residues 1–525 (MSEQKTSGSG…KQLAAKKRRS (525 aa)) are cytoplasmic. Positions 33–296 (FYKEICETCD…DFSYQAIIEG (264 aa)) constitute a Tyrosine-protein phosphatase domain. The segment at 46 to 65 (KEKQFSTSESERHTNRGLNR) is disordered. Ser-83 carries the post-translational modification Phosphoserine. Tyr-86 is subject to Phosphotyrosine. Residues Asp-203, 237–243 (CSAGIGR), and Gln-281 each bind substrate. Cys-237 (phosphocysteine intermediate) is an active-site residue. 3 consecutive short sequence motifs (PXXP motif (SH3-binding)) follow at residues 327 to 330 (PPLP), 339 to 342 (PLAP), and 394 to 397 (PPLP). The segment at 386-517 (EVADSRPLPP…RKQRENEDKQ (132 aa)) is disordered. The span at 404-428 (SDSDEDYLLDDDDEDDTDEDEEYET) shows a compositional bias: acidic residues. 2 short sequence motifs (PXXP motif (SH3-binding)) span residues 459 to 462 (PAVP) and 480 to 483 (PASP). Residues 502–517 (KVNDMKRKQRENEDKQ) show a composition bias toward basic and acidic residues. The helical transmembrane segment at 526 to 545 (LLTYIAAGVVVGVICAYAYT) threads the bilayer. The Extracellular segment spans residues 546 to 548 (KLG).

Belongs to the protein-tyrosine phosphatase family. Non-receptor class 1 subfamily. Interacts (via C-terminus) with dock/dreadlocks; this interaction is independent of insulin stimulation and is required for dephosphorylation of the insulin-like receptor InR.

The protein localises to the cytoplasm. It is found in the membrane. Its subcellular location is the endomembrane system. The protein resides in the nucleus. The catalysed reaction is O-phospho-L-tyrosyl-[protein] + H2O = L-tyrosyl-[protein] + phosphate. In terms of biological role, non-receptor protein tyrosine phosphatase. Required for maintaining dock/dreadlocks in its non-phosphorylated state. Negative regulator of InR/insulin-like receptor signaling through dephosphorylation of tyrosines when recruited by dock/dreadlocks. This Drosophila melanogaster (Fruit fly) protein is Tyrosine-protein phosphatase non-receptor type 61F.